Reading from the N-terminus, the 471-residue chain is Glutamate--tRNA ligase (471 aa).

A 'HIGH' region motif is present at residues 9–19 (PSPTGYLHVGG). Residues Cys-98, Cys-100, Cys-125, and His-127 each coordinate Zn(2+). The 'KMSKS' region signature appears at 237-241 (KLSKR). An ATP-binding site is contributed by Lys-240.

The protein belongs to the class-I aminoacyl-tRNA synthetase family. Glutamate--tRNA ligase type 1 subfamily. In terms of assembly, monomer. Requires Zn(2+) as cofactor.

It is found in the cytoplasm. The enzyme catalyses tRNA(Glu) + L-glutamate + ATP = L-glutamyl-tRNA(Glu) + AMP + diphosphate. Functionally, catalyzes the attachment of glutamate to tRNA(Glu) in a two-step reaction: glutamate is first activated by ATP to form Glu-AMP and then transferred to the acceptor end of tRNA(Glu). This Escherichia coli O6:K15:H31 (strain 536 / UPEC) protein is Glutamate--tRNA ligase.